A 691-amino-acid chain; its full sequence is Elongation factor G (691 aa).

In terms of domain architecture, tr-type G spans 8 to 282 (ERVRNIGIAA…AVVNYLPAPV (275 aa)). Residues 17–24 (AHIDAGKT), 81–85 (DTPGH), and 135–138 (NKMD) contribute to the GTP site.

The protein belongs to the TRAFAC class translation factor GTPase superfamily. Classic translation factor GTPase family. EF-G/EF-2 subfamily.

Its subcellular location is the cytoplasm. Functionally, catalyzes the GTP-dependent ribosomal translocation step during translation elongation. During this step, the ribosome changes from the pre-translocational (PRE) to the post-translocational (POST) state as the newly formed A-site-bound peptidyl-tRNA and P-site-bound deacylated tRNA move to the P and E sites, respectively. Catalyzes the coordinated movement of the two tRNA molecules, the mRNA and conformational changes in the ribosome. This Prochlorococcus marinus (strain NATL2A) protein is Elongation factor G.